Consider the following 430-residue polypeptide: Glutamate-1-semialdehyde 2,1-aminomutase (430 aa).

The residue at position 267 (lysine 267) is an N6-(pyridoxal phosphate)lysine.

The protein belongs to the class-III pyridoxal-phosphate-dependent aminotransferase family. HemL subfamily. In terms of assembly, homodimer. Pyridoxal 5'-phosphate serves as cofactor.

The protein localises to the cytoplasm. The catalysed reaction is (S)-4-amino-5-oxopentanoate = 5-aminolevulinate. Its pathway is porphyrin-containing compound metabolism; protoporphyrin-IX biosynthesis; 5-aminolevulinate from L-glutamyl-tRNA(Glu): step 2/2. In Anaeromyxobacter sp. (strain K), this protein is Glutamate-1-semialdehyde 2,1-aminomutase.